The following is a 171-amino-acid chain: Alpha-amylase/trypsin inhibitor CMd (171 aa).

The first 24 residues, 1-24 (MACKSSRSLLLLATVMVSVFAAAA), serve as a signal peptide directing secretion.

It belongs to the protease inhibitor I6 (cereal trypsin/alpha-amylase inhibitor) family. Heterotetramer of one CMa, one CMb and two CMd chains. Post-translationally, five disulfide bonds, which are essential for the inhibitor activity, are probably present. As to expression, endosperm.

It localises to the secreted. Functionally, part of a complex with inhibitory activity, but CMd is inactive as a separate subunit. The chain is Alpha-amylase/trypsin inhibitor CMd (IAT3) from Hordeum vulgare (Barley).